The following is a 361-amino-acid chain: 3-dehydroquinate synthase (361 aa).

NAD(+) is bound by residues 72 to 77 (SGEKEK), 130 to 131 (TT), lysine 142, and lysine 151. Positions 184, 247, and 264 each coordinate Zn(2+).

The protein belongs to the sugar phosphate cyclases superfamily. Dehydroquinate synthase family. It depends on Co(2+) as a cofactor. Zn(2+) serves as cofactor. NAD(+) is required as a cofactor.

It is found in the cytoplasm. The catalysed reaction is 7-phospho-2-dehydro-3-deoxy-D-arabino-heptonate = 3-dehydroquinate + phosphate. The protein operates within metabolic intermediate biosynthesis; chorismate biosynthesis; chorismate from D-erythrose 4-phosphate and phosphoenolpyruvate: step 2/7. Catalyzes the conversion of 3-deoxy-D-arabino-heptulosonate 7-phosphate (DAHP) to dehydroquinate (DHQ). The sequence is that of 3-dehydroquinate synthase from Bacillus cereus (strain ATCC 10987 / NRS 248).